The primary structure comprises 104 residues: Large ribosomal subunit protein uL24 (104 aa).

The protein belongs to the universal ribosomal protein uL24 family. Part of the 50S ribosomal subunit.

One of two assembly initiator proteins, it binds directly to the 5'-end of the 23S rRNA, where it nucleates assembly of the 50S subunit. Functionally, one of the proteins that surrounds the polypeptide exit tunnel on the outside of the subunit. The polypeptide is Large ribosomal subunit protein uL24 (Aliivibrio fischeri (strain ATCC 700601 / ES114) (Vibrio fischeri)).